Here is a 314-residue protein sequence, read N- to C-terminus: MKKNPKILLIGSGNIGGTLAHLISLKNLGDIVLFDVAEGIPQGKALDIMQANTLAGSDIKIKGTNDYKDIEGSDAIIITAGLPRKPGMSRDDLISVNTGIMKSVAENVKKYAPNAFVIVITNPLDVMVYVMLKESGLPHNKVIGMAGVLDSSRFNFFLAEEFKVSTNSVSSIVLGGHGDAMVPLARYSTVKGVPIPDLVKMGLSTNERIEKIIDRTRNGGGEIVALLKTGSAYYAPAASAVEMLESYLQDKRQILTCAAYLQGEYGVKDLYAGVPIIIGKNGVEKVIELQLTTNEQALFDKSVDGVRKLIEAVK.

NAD(+) contacts are provided by residues glycine 11 to glycine 16 and aspartate 35. Arginine 84 and arginine 90 together coordinate substrate. Residues asparagine 97 and isoleucine 120 to asparagine 122 contribute to the NAD(+) site. 2 residues coordinate substrate: asparagine 122 and arginine 153. The active-site Proton acceptor is histidine 177.

The protein belongs to the LDH/MDH superfamily. MDH type 3 family.

It carries out the reaction (S)-malate + NAD(+) = oxaloacetate + NADH + H(+). Functionally, catalyzes the reversible oxidation of malate to oxaloacetate. The protein is Malate dehydrogenase of Rickettsia bellii (strain RML369-C).